We begin with the raw amino-acid sequence, 89 residues long: Small ribosomal subunit protein uS15 (89 aa).

Belongs to the universal ribosomal protein uS15 family. As to quaternary structure, part of the 30S ribosomal subunit. Forms a bridge to the 50S subunit in the 70S ribosome, contacting the 23S rRNA.

In terms of biological role, one of the primary rRNA binding proteins, it binds directly to 16S rRNA where it helps nucleate assembly of the platform of the 30S subunit by binding and bridging several RNA helices of the 16S rRNA. Its function is as follows. Forms an intersubunit bridge (bridge B4) with the 23S rRNA of the 50S subunit in the ribosome. This Streptococcus uberis (strain ATCC BAA-854 / 0140J) protein is Small ribosomal subunit protein uS15.